The chain runs to 477 residues: Bifunctional protein HldE (477 aa).

A ribokinase region spans residues 1 to 318; it reads MKLSMPRFDQ…RAIQREEGSE (318 aa). 194–197 contributes to the ATP binding site; it reads NLSE. Asp263 is an active-site residue. A cytidylyltransferase region spans residues 343–477; it reads FTNGCFDILH…EKIRKTDKAE (135 aa).

In the N-terminal section; belongs to the carbohydrate kinase PfkB family. This sequence in the C-terminal section; belongs to the cytidylyltransferase family. As to quaternary structure, homodimer.

The catalysed reaction is D-glycero-beta-D-manno-heptose 7-phosphate + ATP = D-glycero-beta-D-manno-heptose 1,7-bisphosphate + ADP + H(+). It catalyses the reaction D-glycero-beta-D-manno-heptose 1-phosphate + ATP + H(+) = ADP-D-glycero-beta-D-manno-heptose + diphosphate. It functions in the pathway nucleotide-sugar biosynthesis; ADP-L-glycero-beta-D-manno-heptose biosynthesis; ADP-L-glycero-beta-D-manno-heptose from D-glycero-beta-D-manno-heptose 7-phosphate: step 1/4. Its pathway is nucleotide-sugar biosynthesis; ADP-L-glycero-beta-D-manno-heptose biosynthesis; ADP-L-glycero-beta-D-manno-heptose from D-glycero-beta-D-manno-heptose 7-phosphate: step 3/4. Catalyzes the phosphorylation of D-glycero-D-manno-heptose 7-phosphate at the C-1 position to selectively form D-glycero-beta-D-manno-heptose-1,7-bisphosphate. Functionally, catalyzes the ADP transfer from ATP to D-glycero-beta-D-manno-heptose 1-phosphate, yielding ADP-D-glycero-beta-D-manno-heptose. The sequence is that of Bifunctional protein HldE from Pseudomonas fluorescens (strain ATCC BAA-477 / NRRL B-23932 / Pf-5).